The sequence spans 648 residues: Threonine--tRNA ligase (648 aa).

The TGS domain maps to 1–63 (MTEINIEFPD…NENVKIEIVT (63 aa)). The tract at residues 243–541 (DHRVIGNNLD…LIEMYKGAFP (299 aa)) is catalytic. 3 residues coordinate Zn(2+): Cys-337, His-388, and His-518.

It belongs to the class-II aminoacyl-tRNA synthetase family. In terms of assembly, homodimer. The cofactor is Zn(2+).

Its subcellular location is the cytoplasm. It catalyses the reaction tRNA(Thr) + L-threonine + ATP = L-threonyl-tRNA(Thr) + AMP + diphosphate + H(+). Functionally, catalyzes the attachment of threonine to tRNA(Thr) in a two-step reaction: L-threonine is first activated by ATP to form Thr-AMP and then transferred to the acceptor end of tRNA(Thr). Also edits incorrectly charged L-seryl-tRNA(Thr). The polypeptide is Threonine--tRNA ligase (Pediococcus pentosaceus (strain ATCC 25745 / CCUG 21536 / LMG 10740 / 183-1w)).